Here is a 227-residue protein sequence, read N- to C-terminus: Cytidylate kinase (227 aa).

Residue 12-20 (GPSGAGKGT) participates in ATP binding.

Belongs to the cytidylate kinase family. Type 1 subfamily.

The protein localises to the cytoplasm. It carries out the reaction CMP + ATP = CDP + ADP. It catalyses the reaction dCMP + ATP = dCDP + ADP. The sequence is that of Cytidylate kinase from Salmonella typhimurium (strain LT2 / SGSC1412 / ATCC 700720).